A 255-amino-acid polypeptide reads, in one-letter code: TIR domain-containing protein (255 aa).

Residues Leu-9 to Leu-185 enclose the TIR domain. Residue Glu-83 is part of the active site. Helical transmembrane passes span Ala-195–Pro-215 and Phe-223–Trp-243. Positions Leu-201 to Ser-255 constitute a KASH domain.

Forms homomers. Interacts with SUN1, SUN2, SUN3, SUN4 and SUN5.

It is found in the nucleus membrane. The enzyme catalyses NAD(+) + H2O = ADP-D-ribose + nicotinamide + H(+). Functionally, could play a role in nuclear morphology, specifically nuclear size. In Arabidopsis thaliana (Mouse-ear cress), this protein is TIR domain-containing protein.